Here is a 715-residue protein sequence, read N- to C-terminus: Integrator complex subunit 13 (715 aa).

Disordered regions lie at residues 572-612 (KPPE…SERI) and 626-659 (AEVI…SKGP). The short motif at 581–591 (KRGRKREDKEE) is the Nuclear localization signal (NLS) element. A cleavage module binding motif (CMBM) region spans residues 658-703 (GPMSLLSLWSSRINTANSRKHQEFVGRLNSVNNKAELYQHLKEENG).

Belongs to the Integrator subunit 13 family. As to quaternary structure, component of the Integrator complex, composed of core subunits INTS1, INTS2, INTS3, INTS4, INTS5, INTS6, INTS7, INTS8, INTS9/RC74, INTS10, INTS11/CPSF3L, INTS12, INTS13, INTS14 and INTS15. The core complex associates with protein phosphatase 2A subunits PPP2CA and PPP2R1A, to form the Integrator-PP2A (INTAC) complex. INTS13 is part of the tail subcomplex, composed of INTS10, INTS13, INTS14 and INTS15.

Its subcellular location is the nucleus. The protein localises to the cytoplasm. Its function is as follows. Component of the integrator complex, a multiprotein complex that terminates RNA polymerase II (Pol II) transcription in the promoter-proximal region of genes. The integrator complex provides a quality checkpoint during transcription elongation by driving premature transcription termination of transcripts that are unfavorably configured for transcriptional elongation: the complex terminates transcription by (1) catalyzing dephosphorylation of the C-terminal domain (CTD) of Pol II subunit POLR2A/RPB1 and SUPT5H/SPT5, (2) degrading the exiting nascent RNA transcript via endonuclease activity and (3) promoting the release of Pol II from bound DNA. The integrator complex is also involved in terminating the synthesis of non-coding Pol II transcripts, such as enhancer RNAs (eRNAs), small nuclear RNAs (snRNAs), telomerase RNAs and long non-coding RNAs (lncRNAs). Within the integrator complex, INTS13 is part of the integrator tail module and acts as a platform for the recruitment of transcription factors at promoters. Plays a role in gastrulation and early embryogenesis. This chain is Integrator complex subunit 13, found in Xenopus laevis (African clawed frog).